A 254-amino-acid polypeptide reads, in one-letter code: Triosephosphate isomerase (254 aa).

12 to 14 (NWK) provides a ligand contact to substrate. The Electrophile role is filled by His99. Glu169 (proton acceptor) is an active-site residue. Residues Gly175, Ser214, and 235-236 (GG) each bind substrate.

This sequence belongs to the triosephosphate isomerase family. As to quaternary structure, homodimer.

Its subcellular location is the cytoplasm. The enzyme catalyses D-glyceraldehyde 3-phosphate = dihydroxyacetone phosphate. The protein operates within carbohydrate biosynthesis; gluconeogenesis. Its pathway is carbohydrate degradation; glycolysis; D-glyceraldehyde 3-phosphate from glycerone phosphate: step 1/1. Functionally, involved in the gluconeogenesis. Catalyzes stereospecifically the conversion of dihydroxyacetone phosphate (DHAP) to D-glyceraldehyde-3-phosphate (G3P). This chain is Triosephosphate isomerase, found in Bartonella quintana (strain Toulouse) (Rochalimaea quintana).